The chain runs to 413 residues: Imidazolonepropionase (413 aa).

Fe(3+) is bound by residues His70 and His72. Zn(2+) contacts are provided by His70 and His72. Residues Arg79, Tyr142, and His175 each contribute to the 4-imidazolone-5-propanoate site. Residue Tyr142 participates in N-formimidoyl-L-glutamate binding. A Fe(3+)-binding site is contributed by His240. His240 lines the Zn(2+) pocket. 4-imidazolone-5-propanoate is bound at residue Glu243. Fe(3+) is bound at residue Asp315. Asp315 contacts Zn(2+). The N-formimidoyl-L-glutamate site is built by Asn317 and Gly319. Residue Ser320 coordinates 4-imidazolone-5-propanoate.

The protein belongs to the metallo-dependent hydrolases superfamily. HutI family. Zn(2+) serves as cofactor. Requires Fe(3+) as cofactor.

The protein resides in the cytoplasm. The enzyme catalyses 4-imidazolone-5-propanoate + H2O = N-formimidoyl-L-glutamate. Its pathway is amino-acid degradation; L-histidine degradation into L-glutamate; N-formimidoyl-L-glutamate from L-histidine: step 3/3. Its function is as follows. Catalyzes the hydrolytic cleavage of the carbon-nitrogen bond in imidazolone-5-propanoate to yield N-formimidoyl-L-glutamate. It is the third step in the universal histidine degradation pathway. This chain is Imidazolonepropionase, found in Treponema denticola (strain ATCC 35405 / DSM 14222 / CIP 103919 / JCM 8153 / KCTC 15104).